A 294-amino-acid polypeptide reads, in one-letter code: MAITAQMVKELREKTGAGMMDCKKALTETNGDMEKAIDWLREKGIAKAAKKADRIAAEGMAYIAVEGNTAVILEVNSETDFVAKNEAFQTLVKELAAHLLKQKPASLDEALGQTMDNGSTVQDYINEAIAKIGEKITLRRFAVVNKADGETFGAYLHMGGRIGVLTLLAGNASEDVAKDVAMHIAALHPKYVSRDDVPQEEIAHEREVLKQQALNEGKPEKIVEKMVEGRLNKFYEDVCLLEQAFVKNPDVTVRQYVESNGATVKQFIRYEVGEGLEKRQDNFAEEVMSQVRKQ.

The interval 79-82 (TDFV) is involved in Mg(2+) ion dislocation from EF-Tu.

It belongs to the EF-Ts family.

It is found in the cytoplasm. In terms of biological role, associates with the EF-Tu.GDP complex and induces the exchange of GDP to GTP. It remains bound to the aminoacyl-tRNA.EF-Tu.GTP complex up to the GTP hydrolysis stage on the ribosome. This is Elongation factor Ts (tsf) from Geobacillus kaustophilus (strain HTA426).